The sequence spans 103 residues: Small ribosomal subunit protein uS10 (103 aa).

This sequence belongs to the universal ribosomal protein uS10 family. Part of the 30S ribosomal subunit.

Functionally, involved in the binding of tRNA to the ribosomes. This is Small ribosomal subunit protein uS10 from Chlorobium limicola (strain DSM 245 / NBRC 103803 / 6330).